The primary structure comprises 238 residues: GATA transcription factor 7 (238 aa).

The disordered stretch occupies residues 24–64 (TSLESSSSQRKEDEQEREKFKSFSDQSTRLSPPEDLLSFPG). Residues 32–45 (QRKEDEQEREKFKS) show a composition bias toward basic and acidic residues. The Nuclear localization signal signature appears at 112-119 (KPRSKRRR). Residues 160-214 (QQLRRCCSHCGVQKTPQWRMGPLGAKTLCNACGVRFKSGRLLPEYRPACSPTFTN) form a GATA-type zinc finger.

This sequence belongs to the type IV zinc-finger family. Class A subfamily.

The protein resides in the nucleus. Its function is as follows. Transcriptional activator that specifically binds 5'-GATA-3' or 5'-GAT-3' motifs within gene promoters. May be involved in the regulation of some light-responsive genes. The chain is GATA transcription factor 7 (GATA7) from Arabidopsis thaliana (Mouse-ear cress).